Reading from the N-terminus, the 1150-residue chain is Pesticidal crystal protein Cry9Ea (1150 aa).

The protein belongs to the delta endotoxin family.

Functionally, promotes colloidosmotic lysis by binding to the midgut epithelial cells of insects. This chain is Pesticidal crystal protein Cry9Ea (cry9Ea), found in Bacillus thuringiensis subsp. aizawai.